The chain runs to 1493 residues: Mediator of RNA polymerase II transcription subunit 14 (1493 aa).

Disordered stretches follow at residues 1–51 (MPSS…YHAA), 71–110 (MIGV…SAKG), 408–427 (TEQG…APTV), 674–693 (QRPR…RSAS), 894–913 (EAGT…NDVD), and 957–997 (GSNT…SSDD). Residues 90–100 (PDSKQSSDADG) show a composition bias toward basic and acidic residues.

Belongs to the Mediator complex subunit 14 family. As to quaternary structure, component of the Mediator complex.

The protein localises to the nucleus. In terms of biological role, component of the Mediator complex, a coactivator involved in the regulated transcription of nearly all RNA polymerase II-dependent genes. Mediator functions as a bridge to convey information from gene-specific regulatory proteins to the basal RNA polymerase II transcription machinery. Mediator is recruited to promoters by direct interactions with regulatory proteins and serves as a scaffold for the assembly of a functional preinitiation complex with RNA polymerase II and the general transcription factors. The sequence is that of Mediator of RNA polymerase II transcription subunit 14 (RGR1) from Mycosarcoma maydis (Corn smut fungus).